Consider the following 84-residue polypeptide: Putative movement protein (84 aa).

Residues 15 to 35 (ALHGILVAFIAVLCLIGCLWA) form a helical membrane-spanning segment.

As to quaternary structure, interacts with the capsid protein (CP). Part of a MP-CP-viral DNA complex.

It localises to the host membrane. Involved in the viral transport within, and between cells. In Miscanthus streak virus (isolate 91) (MiSV), this protein is Putative movement protein.